The primary structure comprises 447 residues: MESRSILETIQMVAEENLDIRTITMGISLFDCVDSDGERARQKIYDKITTSAKDLVKVAAQIQEEYGIPIINKRIAVTPIALIAAASQDQDYVAYAVTMERAAQALGVDLIGGFSALVQKGYQSGDRKLIASIPAALAATSRVCSSVNVGSTRAGINLDAVGEMGRIIKQIAADDPVNCMSLVVFANAVDDNPFMAGAFHGVGEADRVINVGISGPGVVKRALEEVRGQSIDIVSEQIKKTAFKVTRMGQFVGSIASERLHVPFGIVDLSLAPTPNEGDSVAEILEEIGLESVGAPGTTAALALLNDAVKKGGVMACEHVGGLSGAFIPVSEDAEMIRAVSAGRLNIEKLEAMTAVCSVGLDMIAVPGDTSAATISGMIADEAAIGMINNKTTAVRVIPATGKGVGDAVEFGGLFGQAPVMPVNTNQPTTFIKRGGHIPAPIHSFKN.

Belongs to the UPF0210 family. As to quaternary structure, homodimer.

The sequence is that of UPF0210 protein lp_2507 from Lactiplantibacillus plantarum (strain ATCC BAA-793 / NCIMB 8826 / WCFS1) (Lactobacillus plantarum).